The following is a 559-amino-acid chain: Potassium-transporting ATPase potassium-binding subunit (559 aa).

13 helical membrane passes run 5-25 (GFLL…PLGS), 27-47 (LARL…RILW), 63-83 (LLAL…LLFW), 132-152 (GLTV…FALI), 170-190 (LVRI…LFFI), 253-273 (LAQM…FGEA), 283-303 (LLWA…WAEV), 327-347 (FGVL…CGAV), 356-376 (ALGG…FGGV), 379-399 (GLYG…LMIG), 416-436 (MTAL…ALAM), 484-504 (LLAF…MAIA), and 524-544 (GALF…LTFI).

The protein belongs to the KdpA family. In terms of assembly, the system is composed of three essential subunits: KdpA, KdpB and KdpC.

The protein resides in the cell inner membrane. Its function is as follows. Part of the high-affinity ATP-driven potassium transport (or Kdp) system, which catalyzes the hydrolysis of ATP coupled with the electrogenic transport of potassium into the cytoplasm. This subunit binds the periplasmic potassium ions and delivers the ions to the membrane domain of KdpB through an intramembrane tunnel. The polypeptide is Potassium-transporting ATPase potassium-binding subunit (Salmonella typhimurium (strain LT2 / SGSC1412 / ATCC 700720)).